Here is a 326-residue protein sequence, read N- to C-terminus: Malate dehydrogenase (326 aa).

12-18 contributes to the NAD(+) binding site; the sequence is GGTGQIA. 2 residues coordinate substrate: Arg93 and Arg99. Residues Asn106, Gln113, and 130–132 each bind NAD(+); that span reads VGN. Substrate-binding residues include Asn132 and Arg163. The active-site Proton acceptor is the His188.

The protein belongs to the LDH/MDH superfamily. MDH type 2 family.

It carries out the reaction (S)-malate + NAD(+) = oxaloacetate + NADH + H(+). Its function is as follows. Catalyzes the reversible oxidation of malate to oxaloacetate. This Chlamydia trachomatis serovar L2 (strain ATCC VR-902B / DSM 19102 / 434/Bu) protein is Malate dehydrogenase.